The chain runs to 448 residues: Protein EVI2B (448 aa).

The signal sequence occupies residues 1–21 (MDPKYFILILFCGHLNNTFFS). N16 and N50 each carry an N-linked (GlcNAc...) asparagine glycan. The Extracellular segment spans residues 22-202 (KTETITTEKQ…QTPQKNNYNS (181 aa)). Residues 74 to 108 (AKVTAGQPTPAVYTSSEKPEAHTSAGQPLAYNTKQ) are disordered. The segment covering 97–108 (SAGQPLAYNTKQ) has biased composition (polar residues). An N-linked (GlcNAc...) asparagine glycan is attached at N114. A helical membrane pass occupies residues 203 to 226 (IAAILIGVLLTSMLVAIIIIVLWK). Residues 227–448 (CLRKPVLNDQ…SLPPPPAELL (222 aa)) are Cytoplasmic-facing. T249 carries the post-translational modification Phosphothreonine. Residues S268, S271, S278, and S294 each carry the phosphoserine modification. Disordered regions lie at residues 298 to 372 (IEDS…DSTS) and 427 to 448 (SIPP…AELL). Polar residues-rich tracts occupy residues 313–333 (VNGT…VSSS) and 350–372 (QESN…DSTS).

In terms of tissue distribution, bone marrow, peripheral blood mononuclear cells, fibroblasts and Epstein-Barr virus-transformed lymphoblastoid cell lines. Strongly expressed in granulocytic cells, and weakly on lymphocytes cells.

The protein resides in the membrane. Its function is as follows. Required for granulocyte differentiation and functionality of hematopoietic progenitor cells through the control of cell cycle progression and survival of hematopoietic progenitor cells. The sequence is that of Protein EVI2B from Homo sapiens (Human).